A 465-amino-acid chain; its full sequence is Lysosomal dipeptide transporter MFSD1 (465 aa).

Residues 1-23 (MEEEDEEARALLAGGPDEADRGA) are disordered. Residues 11-12 (LL) carry the Dileucine internalization motif motif. Helical transmembrane passes span 39–59 (LAHR…SYFC), 83–103 (LLYA…GFLI), 113–133 (TIIF…GGIF), 135–155 (AFWL…SLAV), 170–191 (LNLV…NMNL), 213–233 (ITLM…LALA), 266–286 (LWLI…FIGL), 303–323 (SAIN…FGLL), 331–351 (IIWV…LAFT), 361–381 (LLGL…AFVV), 392–412 (FMQS…GMIL), and 418–438 (LFLE…VVLL).

This sequence belongs to the major facilitator superfamily. Homodimer. Interacts with lysosomal protein GLMP (via lumenal domain); the interaction starts while both proteins are still in the endoplasmic reticulum and is required for stabilization of MFSD1 in lysosomes but has no direct effect on its targeting to lysosomes or transporter activity.

It localises to the lysosome membrane. The enzyme catalyses L-alpha-aminoacyl-L-arginine(out) = L-alpha-aminoacyl-L-arginine(in). It catalyses the reaction L-arginyl-L-alpha-amino acid(out) = L-arginyl-L-alpha-amino acid(in). The catalysed reaction is L-arginyl-glycine(out) = L-arginyl-glycine(in). It carries out the reaction L-alpha-aminoacyl-L-lysine(out) = L-alpha-aminoacyl-L-lysine(in). The enzyme catalyses L-aspartyl-L-lysine(out) = L-aspartyl-L-lysine(in). It catalyses the reaction L-alanyl-L-lysine(out) = L-alanyl-L-lysine(in). The catalysed reaction is L-lysyl-L-alpha-amino acid(out) = L-lysyl-L-alpha-amino acid(in). It carries out the reaction L-lysyl-L-alanine(out) = L-lysyl-L-alanine(in). The enzyme catalyses L-lysyl-L-lysine(out) = L-lysyl-L-lysine(in). It catalyses the reaction L-lysyl-glycine(out) = L-lysyl-glycine(in). The catalysed reaction is L-alpha-aminoacyl-L-histidine(out) = L-alpha-aminoacyl-L-histidine(in). It carries out the reaction L-histidyl-L-alpha-amino acid(out) = L-histidyl-L-alpha-amino acid(in). The enzyme catalyses L-histidyl-glycine(out) = L-histidyl-glycine(in). Functionally, lysosomal dipeptide uniporter that selectively exports lysine, arginine or histidine-containing dipeptides with a net positive charge from the lysosome lumen into the cytosol. Could play a role in a specific type of protein O-glycosylation indirectly regulating macrophages migration and tissue invasion. Also essential for liver homeostasis. In Homo sapiens (Human), this protein is Lysosomal dipeptide transporter MFSD1.